The chain runs to 416 residues: Alpha-1-antiproteinase (416 aa).

An N-terminal signal peptide occupies residues 1–24 (MALSITRGLLLLAALCCLAPISLA). N-linked (GlcNAc...) asparagine glycans are attached at residues Asn68, Asn105, Asn143, and Asn269. The segment at 371-390 (GSTFLEAIPMSLPPDVEFNR) is RCL. Ser381 bears the Phosphoserine mark.

This sequence belongs to the serpin family. As to quaternary structure, interacts with CELA2A. Interacts with ERGIC3 and LMAN1/ERGIC53. Interacts with PRSS1/Trypsin. In terms of tissue distribution, plasma.

It is found in the secreted. In terms of biological role, inhibitor of serine proteases. Its primary target is elastase, but it also has a moderate affinity for plasmin and thrombin. Inhibits trypsin, chymotrypsin and plasminogen activator. The protein is Alpha-1-antiproteinase (SERPINA1) of Bos taurus (Bovine).